A 237-amino-acid polypeptide reads, in one-letter code: Cysteine-rich venom protein tigrin (237 aa).

Positions 1 to 18 are cleaved as a signal peptide; it reads MIVFILLSLAAVLRQSFG. The region spanning 37 to 165 is the SCP domain; that stretch reads VNIHNSFRRS…LYNYFYVCQY (129 aa). Cystine bridges form between Cys-74–Cys-152, Cys-91–Cys-166, Cys-147–Cys-163, Cys-185–Cys-192, Cys-188–Cys-197, Cys-201–Cys-232, Cys-210–Cys-226, and Cys-217–Cys-230. A ShKT domain is found at 201–232; sequence CTHKDDYNNCNSLVSDCQSDWDKSHCPATCFC.

The protein belongs to the CRISP family. As to expression, expressed by the venom gland.

The protein localises to the secreted. In terms of biological role, this protein does not inhibit smooth muscle contraction elicited by high potassium levels or caffeine. The polypeptide is Cysteine-rich venom protein tigrin (Rhabdophis tigrinus tigrinus (Tiger keelback snake)).